Reading from the N-terminus, the 232-residue chain is 7-cyano-7-deazaguanine synthase (232 aa).

7–17 (LSGGLDSTVVT) serves as a coordination point for ATP. Positions 195, 206, 209, and 212 each coordinate Zn(2+).

The protein belongs to the QueC family. Zn(2+) serves as cofactor.

It catalyses the reaction 7-carboxy-7-deazaguanine + NH4(+) + ATP = 7-cyano-7-deazaguanine + ADP + phosphate + H2O + H(+). It participates in purine metabolism; 7-cyano-7-deazaguanine biosynthesis. In terms of biological role, catalyzes the ATP-dependent conversion of 7-carboxy-7-deazaguanine (CDG) to 7-cyano-7-deazaguanine (preQ(0)). The sequence is that of 7-cyano-7-deazaguanine synthase from Methanocaldococcus jannaschii (strain ATCC 43067 / DSM 2661 / JAL-1 / JCM 10045 / NBRC 100440) (Methanococcus jannaschii).